The following is a 263-amino-acid chain: Zinc import ATP-binding protein ZnuC (263 aa).

Positions 11 to 226 constitute an ABC transporter domain; sequence VELKNINVVF…PTFIHFFGDQ (216 aa). ATP is bound at residue 43-50; sequence GPNGGGKS.

This sequence belongs to the ABC transporter superfamily. Zinc importer (TC 3.A.1.15.5) family. As to quaternary structure, the complex is composed of two ATP-binding proteins (ZnuC), two transmembrane proteins (ZnuB) and a solute-binding protein (ZnuA).

Its subcellular location is the cell inner membrane. It carries out the reaction Zn(2+)(out) + ATP(in) + H2O(in) = Zn(2+)(in) + ADP(in) + phosphate(in) + H(+)(in). Its function is as follows. Part of the ABC transporter complex ZnuABC involved in zinc import. Responsible for energy coupling to the transport system. This chain is Zinc import ATP-binding protein ZnuC, found in Pasteurella multocida (strain Pm70).